Reading from the N-terminus, the 352-residue chain is Nicotinate-nucleotide--dimethylbenzimidazole phosphoribosyltransferase (352 aa).

Glu318 acts as the Proton acceptor in catalysis.

It belongs to the CobT family.

The catalysed reaction is 5,6-dimethylbenzimidazole + nicotinate beta-D-ribonucleotide = alpha-ribazole 5'-phosphate + nicotinate + H(+). The protein operates within nucleoside biosynthesis; alpha-ribazole biosynthesis; alpha-ribazole from 5,6-dimethylbenzimidazole: step 1/2. Catalyzes the synthesis of alpha-ribazole-5'-phosphate from nicotinate mononucleotide (NAMN) and 5,6-dimethylbenzimidazole (DMB). The sequence is that of Nicotinate-nucleotide--dimethylbenzimidazole phosphoribosyltransferase from Azotobacter vinelandii (strain DJ / ATCC BAA-1303).